The chain runs to 148 residues: Small ribosomal subunit protein uS13 (148 aa).

Positions 128–148 (RGQRTKSTGRRGSTIGVRKKK) are disordered.

It belongs to the universal ribosomal protein uS13 family. In terms of assembly, part of the 30S ribosomal subunit. Forms a loose heterodimer with protein S19. Forms two bridges to the 50S subunit in the 70S ribosome.

Its function is as follows. Located at the top of the head of the 30S subunit, it contacts several helices of the 16S rRNA. In the 70S ribosome it contacts the 23S rRNA (bridge B1a) and protein L5 of the 50S subunit (bridge B1b), connecting the 2 subunits; these bridges are implicated in subunit movement. This chain is Small ribosomal subunit protein uS13, found in Methanococcoides burtonii (strain DSM 6242 / NBRC 107633 / OCM 468 / ACE-M).